The sequence spans 250 residues: Ribonuclease 3 (250 aa).

Positions 1 to 15 are enriched in basic residues; that stretch reads MTKTPAKKKRARSSK. The tract at residues 1–21 is disordered; the sequence is MTKTPAKKKRARSSKAKGTDA. The RNase III domain maps to 22-150; that stretch reads NAALEARIGH…VIGAIFLDGG (129 aa). Residue glutamate 63 coordinates Mg(2+). Aspartate 67 is an active-site residue. Mg(2+) is bound by residues aspartate 136 and glutamate 139. Residue glutamate 139 is part of the active site. Residues 175–244 form the DRBM domain; the sequence is DPKTVLQEWA…ASVMIEREGV (70 aa).

This sequence belongs to the ribonuclease III family. As to quaternary structure, homodimer. Requires Mg(2+) as cofactor.

The protein resides in the cytoplasm. The catalysed reaction is Endonucleolytic cleavage to 5'-phosphomonoester.. Functionally, digests double-stranded RNA. Involved in the processing of primary rRNA transcript to yield the immediate precursors to the large and small rRNAs (23S and 16S). Processes some mRNAs, and tRNAs when they are encoded in the rRNA operon. Processes pre-crRNA and tracrRNA of type II CRISPR loci if present in the organism. This chain is Ribonuclease 3, found in Bradyrhizobium diazoefficiens (strain JCM 10833 / BCRC 13528 / IAM 13628 / NBRC 14792 / USDA 110).